The primary structure comprises 414 residues: TAR DNA-binding protein 43 (414 aa).

RRM domains follow at residues 104 to 200 (SDLI…RCTE) and 191 to 262 (RKVF…NAEP). A compositionally biased stretch (basic and acidic residues) spans 261–274 (EPKHNSNRQLERGG). Disordered regions lie at residues 261–303 (EPKH…GNNQ) and 341–373 (ASQQ…GNNS). The segment covering 275-303 (RFGGNPGGFGNQGGFGNSRGGGGGLGNNQ) has biased composition (gly residues). Over residues 342-373 (SQQNQSGPSGNNQPQGNMQREQNQGFSSGNNS) the composition is skewed to low complexity.

As to quaternary structure, homodimer.

It is found in the nucleus. The protein resides in the cytoplasm. The protein localises to the stress granule. It localises to the mitochondrion. In terms of biological role, probably involved in transcriptional repression. May play a role in the maintenance of the circadian clock periodicity. The protein is TAR DNA-binding protein 43 (TARDBP) of Gallus gallus (Chicken).